Here is a 1353-residue protein sequence, read N- to C-terminus: MSHRVLVIGSGGREHAICWKLSQSPKVAQIYALPGSHGIQLVEKCRNLDAKTLDPKDFEAIAKWSKENQIALVVVGPEDPLALGLGDVLQSAGIPCFGPGKQGAQIEADKKWAKDFMLRHGIPTARYESFTDTEKAKAFIRSAPYPALVVKAAGLAAGKGVVVAANAKEACQAVDEILGDLKYGQAGATLVVEELLEGEEVSVLAFTDGKSVRAMLPAQDHKRLGNGDTGPNTGGMGAYCPCPLISQPALELVQKAVLERAVQGLIKERINYQGVLYAGLMLTRDGPRVLEFNCRFGDPETQVILPLLESDLFDVMEACCSGKLDKIPLQWRNGVSAVGVILASAGYPETSTKGCIISGLPAANTPTQLVFHSGLAVNAQKEALTNGGRVLIAIALDGSLKEAAAKATKLAGSISFSGSGAQYRTDIAQKAFKIASASTPGLSYKDSGVDIDAGDALVQRIKPLSRGTQRPGVIGGLGGFGGLFRLKELTYKEPVIAEATQGVGAKIHLALTHEFYENVGYDLFALAANDVLEVGAEPVAFLDYIACGKLQVPLAAQLVKGMADGCRDARCALVGGETAEMPSLYAPGQHDMAGYCVGIVEHSRILPRFDLYQPGDLLIGLPSSGLHCAGFNEILTQLAASKVNLRERSPVDGGDDGLTLAHVLATPTQLYVQQLLPHLQKGDEIKSVAHVTHGLLNDILRLLPDGFETTLDFGAVPVPKIFGWLAGKLKLSAQTILERHNCGIGMVLILPQSSQLWRTSLPGAKVLGVLQRRSKVSGSPVQVRNFVEQLEKVASPFGGLGDRELPEELKKLPSNSDLSAPREECFENAAGRRLTRIPTHYKDPILILGTDGVGTKLKIAQQTNRNTSVGIDLVAMCVNDILCNGAEPISFSSYYACGHWQEQLAKGVHSGVQEGARQANSSFIDSHSAALPLLYEPQVYDLAGFALGIAEHTGILPLLAEIQPGDVLIGLPSSGVHSNGFSLVHAVLKRVGLGLHDKAPFSDKTLGEELLVPTKIYVKALSTLLSRGKHGIKALAHITGGGLSENIPRVLRKDLAVRLDANKFQLPPVFAWLAAAGNISSTELQRTYNCGLGMVLVVAPTEVEDVLKELRYPQRAAVVGEVVARKDPKKSQVVVQNFEASLARTQKMLSQRRKRVAVLISGTGSNLQALIDATRDSAQGIHADVVLVISNKPGVLGLQRATQAGIPSLVISHKDFASREVYDAELTRNLKAARVDLICLAGFMRVLSAPFVREWRGRLVNIHPSLLPKYPGLHVQKQALEAGEKESGCTVHFVDEGVDTGAIIVQAAVPILPDDDEDSLTQRIHKAEHWAFPRALAMLVNGTALISPEVSSQ.

One can recognise an ATP-grasp domain in the interval 114-321 (KDFMLRHGIP…LFDVMEACCS (208 aa)). ATP contacts are provided by residues 193–196 (EELL), Glu200, Arg223, and Asn232. Mg(2+) contacts are provided by Glu291 and Asn293. The interval 441–1155 (GLSYKDSGVD…QKMLSQRRKR (715 aa)) is AIRS domain. A phosphoserine mark is found at Ser814 and Ser816. The tract at residues 1153-1353 (RKRVAVLISG…ALISPEVSSQ (201 aa)) is GART domain. 1164-1166 (GSN) lines the N(1)-(5-phospho-beta-D-ribosyl)glycinamide pocket. Residues Arg1219, 1244-1247 (MRVL), and Asn1261 each bind (6R)-10-formyltetrahydrofolate. His1263 functions as the Proton donor in the catalytic mechanism. 1295 to 1299 (DEGVD) is a (6R)-10-formyltetrahydrofolate binding site. 1325–1328 (HKAE) is a N(1)-(5-phospho-beta-D-ribosyl)glycinamide binding site.

This sequence in the N-terminal section; belongs to the GARS family. The protein in the central section; belongs to the AIR synthase family. In the C-terminal section; belongs to the GART family. In terms of assembly, homodimer. Mg(2+) serves as cofactor. The cofactor is Mn(2+).

It carries out the reaction 5-phospho-beta-D-ribosylamine + glycine + ATP = N(1)-(5-phospho-beta-D-ribosyl)glycinamide + ADP + phosphate + H(+). The catalysed reaction is 2-formamido-N(1)-(5-O-phospho-beta-D-ribosyl)acetamidine + ATP = 5-amino-1-(5-phospho-beta-D-ribosyl)imidazole + ADP + phosphate + H(+). The enzyme catalyses N(1)-(5-phospho-beta-D-ribosyl)glycinamide + (6R)-10-formyltetrahydrofolate = N(2)-formyl-N(1)-(5-phospho-beta-D-ribosyl)glycinamide + (6S)-5,6,7,8-tetrahydrofolate + H(+). It participates in purine metabolism; IMP biosynthesis via de novo pathway; 5-amino-1-(5-phospho-D-ribosyl)imidazole from N(2)-formyl-N(1)-(5-phospho-D-ribosyl)glycinamide: step 2/2. It functions in the pathway purine metabolism; IMP biosynthesis via de novo pathway; N(1)-(5-phospho-D-ribosyl)glycinamide from 5-phospho-alpha-D-ribose 1-diphosphate: step 2/2. The protein operates within purine metabolism; IMP biosynthesis via de novo pathway; N(2)-formyl-N(1)-(5-phospho-D-ribosyl)glycinamide from N(1)-(5-phospho-D-ribosyl)glycinamide (10-formyl THF route): step 1/1. Its function is as follows. Trifunctional enzyme that catalyzes three distinct reactions as part of the 'de novo' inosine monophosphate biosynthetic pathway. In Drosophila melanogaster (Fruit fly), this protein is Trifunctional purine biosynthetic protein adenosine-3.